The following is a 423-amino-acid chain: GPI mannosyltransferase 2 (423 aa).

9 helical membrane-spanning segments follow: residues 7–27 (LTLIFIAACLSRILQLTILSG), 102–122 (VILGGTIVANVAFVAATLVLY), 128–148 (IFNPTFAFLTSLLYLLPPTAT), 151–171 (APYTEPIYSLLTFSGIYLLSI), 191–211 (TGIFNSITLMCFAVFGDAHIF), 228–248 (FLSAILVVAPFFMFQHYTETV), 298–318 (LAMPILFFSLAGVVKFFSHLV), 333–353 (PPPILFELYSVHVLTMALLLF), and 400–420 (YWIGWTVVWGAVAAVLWAGHY).

The protein belongs to the PIGV family.

The protein localises to the endoplasmic reticulum membrane. It participates in glycolipid biosynthesis; glycosylphosphatidylinositol-anchor biosynthesis. In terms of biological role, mannosyltransferase involved in glycosylphosphatidylinositol-anchor biosynthesis. Transfers the second mannose to the glycosylphosphatidylinositol during GPI precursor assembly. The chain is GPI mannosyltransferase 2 (GPI18) from Cryptococcus neoformans var. neoformans serotype D (strain JEC21 / ATCC MYA-565) (Filobasidiella neoformans).